A 419-amino-acid polypeptide reads, in one-letter code: Tyrosine--tRNA ligase (419 aa).

Tyr-34 provides a ligand contact to L-tyrosine. The 'HIGH' region signature appears at 39 to 48; it reads PSGDSMHIGH. L-tyrosine contacts are provided by Tyr-168 and Gln-172. Residues 230–234 carry the 'KMSKS' region motif; the sequence is KFGKS. An ATP-binding site is contributed by Lys-233. In terms of domain architecture, S4 RNA-binding spans 352 to 418; the sequence is ANLVDWLVTL…GKKKYFLVSY (67 aa).

Belongs to the class-I aminoacyl-tRNA synthetase family. TyrS type 1 subfamily. As to quaternary structure, homodimer.

It localises to the cytoplasm. The enzyme catalyses tRNA(Tyr) + L-tyrosine + ATP = L-tyrosyl-tRNA(Tyr) + AMP + diphosphate + H(+). Functionally, catalyzes the attachment of tyrosine to tRNA(Tyr) in a two-step reaction: tyrosine is first activated by ATP to form Tyr-AMP and then transferred to the acceptor end of tRNA(Tyr). This is Tyrosine--tRNA ligase from Listeria monocytogenes serotype 4a (strain HCC23).